Here is an 85-residue protein sequence, read N- to C-terminus: U4-theraphotoxin-Hhn1z (85 aa).

The signal sequence occupies residues 1–22 (MKMTLIAILTCAAVLVLHTTAA). Positions 23 to 48 (EELEAESQLMEVGMPDTELEAVDEER) are excised as a propeptide. 3 cysteine pairs are disulfide-bonded: Cys-52-Cys-66, Cys-56-Cys-77, and Cys-71-Cys-82.

It belongs to the neurotoxin 12 (Hwtx-2) family. 02 (Hwtx-2) subfamily. In terms of tissue distribution, expressed by the venom gland.

It localises to the secreted. Functionally, postsynaptic neurotoxin. The chain is U4-theraphotoxin-Hhn1z from Cyriopagopus hainanus (Chinese bird spider).